A 273-amino-acid polypeptide reads, in one-letter code: Undecaprenyl-diphosphatase (273 aa).

A run of 7 helical transmembrane segments spans residues 6-26 (SLLIAAILGVVEGLTEFLPVS), 45-65 (AKTFEVVIQLGSILAVVVMFW), 90-110 (LTLIHILLGMIPAVVLGLLFH), 116-136 (LFNPINVMYALVVGGLLLIAA), 190-210 (YAASEFSFLLAVPMMMGATAL), 222-242 (GDIPMFAVGFITAFVVALIAI), and 252-272 (ISFIPFAIYRFIVAAAVYVVF).

Belongs to the UppP family.

It localises to the cell inner membrane. It catalyses the reaction di-trans,octa-cis-undecaprenyl diphosphate + H2O = di-trans,octa-cis-undecaprenyl phosphate + phosphate + H(+). Catalyzes the dephosphorylation of undecaprenyl diphosphate (UPP). Confers resistance to bacitracin. This Escherichia coli O157:H7 protein is Undecaprenyl-diphosphatase.